A 274-amino-acid polypeptide reads, in one-letter code: Thiamine kinase (274 aa).

Belongs to the thiamine kinase family.

It carries out the reaction thiamine + ATP = thiamine phosphate + ADP + H(+). It functions in the pathway cofactor biosynthesis; thiamine diphosphate biosynthesis; thiamine phosphate from thiamine: step 1/1. Its function is as follows. Catalyzes the ATP-dependent phosphorylation of thiamine to thiamine phosphate. Is involved in thiamine salvage. This Escherichia coli O139:H28 (strain E24377A / ETEC) protein is Thiamine kinase.